Consider the following 119-residue polypeptide: Ribonuclease P protein component (119 aa).

This sequence belongs to the RnpA family. Consists of a catalytic RNA component (M1 or rnpB) and a protein subunit.

The catalysed reaction is Endonucleolytic cleavage of RNA, removing 5'-extranucleotides from tRNA precursor.. Its function is as follows. RNaseP catalyzes the removal of the 5'-leader sequence from pre-tRNA to produce the mature 5'-terminus. It can also cleave other RNA substrates such as 4.5S RNA. The protein component plays an auxiliary but essential role in vivo by binding to the 5'-leader sequence and broadening the substrate specificity of the ribozyme. This is Ribonuclease P protein component from Syntrophomonas wolfei subsp. wolfei (strain DSM 2245B / Goettingen).